The primary structure comprises 453 residues: tRNA modification GTPase MnmE (453 aa).

Arg-22, Glu-79, and Lys-119 together coordinate (6S)-5-formyl-5,6,7,8-tetrahydrofolate. Residues 215–376 form the TrmE-type G domain; the sequence is GMKVVIAGRP…LRQHLKECMG (162 aa). Asn-225 contributes to the K(+) binding site. Residues 225 to 230, 244 to 250, 269 to 272, and 334 to 337 each bind GTP; these read NAGKSS, TDIAGTT, DTAG, and NKAD. Residue Ser-229 participates in Mg(2+) binding. K(+) is bound by residues Thr-244, Ile-246, and Thr-249. Residue Thr-250 coordinates Mg(2+). Residue Lys-453 participates in (6S)-5-formyl-5,6,7,8-tetrahydrofolate binding.

Belongs to the TRAFAC class TrmE-Era-EngA-EngB-Septin-like GTPase superfamily. TrmE GTPase family. As to quaternary structure, homodimer. Heterotetramer of two MnmE and two MnmG subunits. Requires K(+) as cofactor.

It is found in the cytoplasm. Exhibits a very high intrinsic GTPase hydrolysis rate. Involved in the addition of a carboxymethylaminomethyl (cmnm) group at the wobble position (U34) of certain tRNAs, forming tRNA-cmnm(5)s(2)U34. The sequence is that of tRNA modification GTPase MnmE from Vibrio cholerae serotype O1 (strain ATCC 39315 / El Tor Inaba N16961).